Consider the following 49-residue polypeptide: Delta-actitoxin-Axm1b (49 aa).

A well-structured region region spans residues 1-7 (GVPCLCD). Intrachain disulfides connect C4/C46, C6/C36, and C29/C47. Positions 8–17 (SDGPRPRGNT) are arg-14 loop (non-well-structured region). Positions 18 to 49 (LSGILWFYPSGCPSGWHNCKAHGPNIGWCCKK) are well-structured region.

This sequence belongs to the sea anemone sodium channel inhibitory toxin family. Type I subfamily.

It localises to the secreted. The protein resides in the nematocyst. Its function is as follows. Binds specifically to voltage-gated sodium channels (Nav) (site 3), thereby delaying their inactivation. This toxin has the highest affinity of all anemone toxins for the mammalian sodium channel, whereas its paralog Anthopleurin-A retains the greatest capacity to discriminate between cardiac (Nav1.5/SCN5A) and neuronal sodium channels. When tested electrophysiologically, this toxin exhibits a high affinity for multiple sodium channels with a 50-fold preference for rat cardiac (Nav1.5/SCN5A) over neuronal channels (0.1 nM versus 5 nM). When tested by ion flux, the affinities are similar and appear to have higher affinity (9 nM versus 22 nM). The residue Lys-37 of this toxin has been shown to interact with channel Nav1.5 (residue Asp-1612 in rat and Asp-1610 in human), which is located in the DIV S3-S4 linker (corresponding to channel site 3). Selectively modifies sodium channel inactivation from the open state with little effect on channel activation or on inactivation from closed states. Does not display phospholipid-binding activities, suggesting that the domain IV S3-S4 linker is located at the extracellular surface and not buried in the phospholipid bilayer. This chain is Delta-actitoxin-Axm1b, found in Anthopleura xanthogrammica (Giant green sea anemone).